Here is a 341-residue protein sequence, read N- to C-terminus: Coiled-coil domain-containing protein 86 (341 aa).

Residues 1–341 (MGTPLRRSRR…QPPQRPVAKV (341 aa)) are disordered. Position 18 is a phosphoserine (S18). A compositionally biased stretch (basic and acidic residues) spans 26–49 (EVSRAKRALVDFKSNPEETRELES). S59 carries the post-translational modification Phosphoserine. Low complexity predominate over residues 64–73 (PETSPESPCP). The residue at position 66 (T66) is a Phosphothreonine. Residues S67, S70, S81, S92, S103, S114, and S124 each carry the phosphoserine modification. The segment covering 105–114 (AGQTESNPES) has biased composition (polar residues). Residues 130–139 (EVAHAKEEVI) show a composition bias toward basic and acidic residues. Residues S142, S169, S170, and S200 each carry the phosphoserine modification. The span at 219-235 (GKPKSGRVWKDRSKKRF) shows a compositional bias: basic residues. The segment covering 254–298 (ERQERKLAKDFARHLEEEKQRRRQEKKERRAENLRRRLENERKAE) has biased composition (basic and acidic residues). Positions 261–304 (AKDFARHLEEEKQRRRQEKKERRAENLRRRLENERKAEIVQVIR) form a coiled coil. Positions 307–317 (AKLKKAKKKQL) are enriched in basic residues. R323 is modified (citrulline).

Citrullinated by PADI4.

The protein resides in the nucleus. It localises to the chromosome. The protein localises to the nucleolus. Required for proper chromosome segregation during mitosis and error-free mitotic progression. This Rattus norvegicus (Rat) protein is Coiled-coil domain-containing protein 86.